The sequence spans 318 residues: Deoxyribose-phosphate aldolase (318 aa).

Asp155 acts as the Proton donor/acceptor in catalysis. Lys218 acts as the Schiff-base intermediate with acetaldehyde in catalysis. Lys254 serves as the catalytic Proton donor/acceptor.

It belongs to the DeoC/FbaB aldolase family. DeoC type 2 subfamily. As to quaternary structure, interacts with YBX1.

It is found in the cytoplasm. Its subcellular location is the cytoplasmic granule. The protein localises to the nucleus. It catalyses the reaction 2-deoxy-D-ribose 5-phosphate = D-glyceraldehyde 3-phosphate + acetaldehyde. It participates in carbohydrate degradation; 2-deoxy-D-ribose 1-phosphate degradation; D-glyceraldehyde 3-phosphate and acetaldehyde from 2-deoxy-alpha-D-ribose 1-phosphate: step 2/2. Catalyzes a reversible aldol reaction between acetaldehyde and D-glyceraldehyde 3-phosphate to generate 2-deoxy-D-ribose 5-phosphate. Participates in stress granule (SG) assembly. May allow ATP production from extracellular deoxyinosine in conditions of energy deprivation. The sequence is that of Deoxyribose-phosphate aldolase (DERA) from Bos taurus (Bovine).